We begin with the raw amino-acid sequence, 481 residues long: Beta-1,3-glucan-binding protein (481 aa).

The N-terminal stretch at 1 to 18 is a signal peptide; that stretch reads RCARVCAVLFLFIQISYG. A CBM39 domain is found at 20 to 120; the sequence is YQVPQVTVQA…LSFTVSALED (101 aa). A glycan (N-linked (GlcNAc...) asparagine) is linked at asparagine 110. Residues 124–481 form the GH16 domain; that stretch reads TGTGTDPVPT…LVDYVKVVAL (358 aa).

Belongs to the insect beta-1,3-glucan binding protein family.

It localises to the secreted. Its function is as follows. Involved in the recognition of invading microorganisms. Binds specifically to beta-1,3-glucan and activates the phenoloxidase cascade. This chain is Beta-1,3-glucan-binding protein, found in Hyphantria cunea (Fall webworm moth).